The primary structure comprises 260 residues: Flagellar basal-body rod protein FlgG (260 aa).

It belongs to the flagella basal body rod proteins family. As to quaternary structure, the basal body constitutes a major portion of the flagellar organelle and consists of four rings (L,P,S, and M) mounted on a central rod. The rod consists of about 26 subunits of FlgG in the distal portion, and FlgB, FlgC and FlgF are thought to build up the proximal portion of the rod with about 6 subunits each.

It is found in the bacterial flagellum basal body. This chain is Flagellar basal-body rod protein FlgG (flgG), found in Escherichia coli O157:H7.